We begin with the raw amino-acid sequence, 372 residues long: Cytochrome b (372 aa).

4 helical membrane passes run 25 to 45 (FGSM…FLAI), 69 to 90 (WIIQ…YTHI), 105 to 125 (WLSG…GYVL), and 170 to 190 (FFAL…IHII). Residues His-75 and His-89 each coordinate heme b. His-174 and His-188 together coordinate heme b. An a ubiquinone-binding site is contributed by His-193. The next 4 helical transmembrane spans lie at 218 to 238 (YKDT…MSFM), 280 to 300 (LGGT…PFTH), 312 to 332 (LTQI…WSAT), and 339 to 358 (FIFI…IINP).

This sequence belongs to the cytochrome b family. As to quaternary structure, the cytochrome bc1 complex contains 3 respiratory subunits (MT-CYB, CYC1 and UQCRFS1), 2 core proteins (UQCRC1 and UQCRC2) and probably 6 low-molecular weight proteins. Requires heme b as cofactor.

Its subcellular location is the mitochondrion inner membrane. In terms of biological role, component of the ubiquinol-cytochrome c reductase complex (complex III or cytochrome b-c1 complex) that is part of the mitochondrial respiratory chain. The b-c1 complex mediates electron transfer from ubiquinol to cytochrome c. Contributes to the generation of a proton gradient across the mitochondrial membrane that is then used for ATP synthesis. This is Cytochrome b (MT-CYB) from Hydrophis semperi (Lake Taal snake).